A 244-amino-acid polypeptide reads, in one-letter code: Carboxy-S-adenosyl-L-methionine synthase (244 aa).

S-adenosyl-L-methionine is bound by residues Tyr41, 66–68 (GCS), Asn134, and Arg201.

It belongs to the class I-like SAM-binding methyltransferase superfamily. Cx-SAM synthase family. Homodimer.

It carries out the reaction prephenate + S-adenosyl-L-methionine = carboxy-S-adenosyl-L-methionine + 3-phenylpyruvate + H2O. Catalyzes the conversion of S-adenosyl-L-methionine (SAM) to carboxy-S-adenosyl-L-methionine (Cx-SAM). The sequence is that of Carboxy-S-adenosyl-L-methionine synthase from Cellvibrio japonicus (strain Ueda107) (Pseudomonas fluorescens subsp. cellulosa).